The sequence spans 513 residues: Probable lipid II flippase MurJ (513 aa).

The next 15 helical transmembrane spans lie at 3–23 (ILKS…LGFM), 25–45 (DLLI…FLAF), 83–103 (FISN…AFGI), 133–153 (IMFP…ILNA), 162–182 (YSSI…TAYF), 186–206 (ILSL…YQFP), 221–241 (ILNL…LGMS), 245–265 (VSII…ISWI), 271–291 (LVEF…LPLL), 313–333 (LVCI…ESLI), 354–374 (IEFY…LAGF), 382–402 (TPMK…IFFI), 405–425 (FQYT…FFLL), 441–461 (WLRF…LLFI), and 481–501 (LFYI…CLGL).

It belongs to the MurJ/MviN family.

The protein resides in the cell inner membrane. It functions in the pathway cell wall biogenesis; peptidoglycan biosynthesis. Functionally, involved in peptidoglycan biosynthesis. Transports lipid-linked peptidoglycan precursors from the inner to the outer leaflet of the cytoplasmic membrane. This Buchnera aphidicola subsp. Baizongia pistaciae (strain Bp) protein is Probable lipid II flippase MurJ.